The chain runs to 190 residues: Large ribosomal subunit protein bL25 (190 aa).

It belongs to the bacterial ribosomal protein bL25 family. CTC subfamily. In terms of assembly, part of the 50S ribosomal subunit; part of the 5S rRNA/L5/L18/L25 subcomplex. Contacts the 5S rRNA. Binds to the 5S rRNA independently of L5 and L18.

Its function is as follows. This is one of the proteins that binds to the 5S RNA in the ribosome where it forms part of the central protuberance. The polypeptide is Large ribosomal subunit protein bL25 (Neisseria meningitidis serogroup C (strain 053442)).